Reading from the N-terminus, the 559-residue chain is Formate--tetrahydrofolate ligase (559 aa).

An ATP-binding site is contributed by 68-75 (TPAGEGKS).

The protein belongs to the formate--tetrahydrofolate ligase family.

The enzyme catalyses (6S)-5,6,7,8-tetrahydrofolate + formate + ATP = (6R)-10-formyltetrahydrofolate + ADP + phosphate. The protein operates within one-carbon metabolism; tetrahydrofolate interconversion. The polypeptide is Formate--tetrahydrofolate ligase (Clostridium tetani (strain Massachusetts / E88)).